The sequence spans 152 residues: Large ribosomal subunit protein uL15 (152 aa).

The segment at 1 to 57 is disordered; it reads MTSTLNTLKSNSGSRKKKLRKGRGIAAGQGASCGFGMRGQKSRSGRPTRPGFEGGQM. Residues 14-23 show a composition bias toward basic residues; the sequence is SRKKKLRKGR. Over residues 25–37 the composition is skewed to gly residues; that stretch reads IAAGQGASCGFGM.

This sequence belongs to the universal ribosomal protein uL15 family. Part of the 50S ribosomal subunit.

In terms of biological role, binds to the 23S rRNA. This chain is Large ribosomal subunit protein uL15, found in Prochlorococcus marinus (strain MIT 9312).